A 187-amino-acid chain; its full sequence is UPF0301 protein YqgE (187 aa).

Belongs to the UPF0301 (AlgH) family.

This chain is UPF0301 protein YqgE, found in Salmonella heidelberg (strain SL476).